Consider the following 295-residue polypeptide: Polyisoprenoid diphosphate/phosphate phosphohydrolase PLPP6 (295 aa).

Disordered regions lie at residues 1-39 (MPSPRRSMEGRPLGVSASSSSSSPGSPAHGGGGGGSRFE) and 61-90 (SESPVHRRGSFPLAAAGPSQSPAPPLPEED). The Cytoplasmic portion of the chain corresponds to 1-132 (MPSPRRSMEG…ESSSWGSVRP (132 aa)). The span at 16–27 (SASSSSSSPGSP) shows a compositional bias: low complexity. Residues serine 26, serine 36, and serine 70 each carry the phosphoserine modification. Residues 133–153 (LMKLLEISGHGIPWLLGTLYC) traverse the membrane as a helical segment. The Lumenal segment spans residues 154 to 164 (LCRSDSWAGRE). The helical transmembrane segment at 165-185 (VLMNLLFALLLDLLLVALIKG) threads the bilayer. Residues 184-192 (KGLVRRRRP) are phosphatase sequence motif I. Topologically, residues 186–228 (LVRRRRPAHNQMDMFVTLSVDKYSFPSGHATRAALMSRFILNH) are cytoplasmic. The tract at residues 211–214 (PSGH) is phosphatase sequence motif II. Histidine 214 (proton donors) is an active-site residue. The chain crosses the membrane as a helical span at residues 229–249 (LVLAIPLRVLVVLWAFVLGLS). Residues 249–260 (SRVMLGRHNVTD) are phosphatase sequence motif III. The Lumenal segment spans residues 250–260 (RVMLGRHNVTD). Residue histidine 256 is the Nucleophile of the active site. A helical transmembrane segment spans residues 261–281 (VAFGFFLGYMQYSIVDYCWLS). At 282-295 (PHNAPVLFLLWSQR) the chain is on the cytoplasmic side.

It belongs to the PA-phosphatase related phosphoesterase family. In terms of processing, phosphorylation by PKC activates the phosphatase activity towards presqualene diphosphate. As to expression, widely expressed. Expressed in most organs, in particular gastrointestinal organs, spleen, placenta, kidney, thymus and brain.

It localises to the endoplasmic reticulum membrane. The protein localises to the nucleus envelope. Its subcellular location is the nucleus inner membrane. It carries out the reaction presqualene diphosphate + H2O = presqualene phosphate + phosphate + H(+). It catalyses the reaction presqualene phosphate + H2O = presqualene alcohol + phosphate. The enzyme catalyses (2E,6E)-farnesyl diphosphate + H2O = (2E,6E)-farnesyl phosphate + phosphate + H(+). The catalysed reaction is (2E,6E)-farnesyl phosphate + H2O = (2E,6E)-farnesol + phosphate. It carries out the reaction (2E,6E,10E)-geranylgeranyl diphosphate + H2O = (2E,6E,10E)-geranylgeranyl phosphate + phosphate + H(+). It catalyses the reaction (2E,6E,10E)-geranylgeranyl phosphate + H2O = (2E,6E,10E)-geranylgeraniol + phosphate. The enzyme catalyses (2E)-geranyl diphosphate + H2O = (2E)-geranyl phosphate + phosphate + H(+). The catalysed reaction is (2E)-geranyl phosphate + H2O = (2E)-geraniol + phosphate. It carries out the reaction 1,2-dihexadecanoyl-sn-glycero-3-phosphate + H2O = 1,2-dihexadecanoyl-sn-glycerol + phosphate. Inhibited by propranolol. Not inhibited by N-ethylmaleimide or bromoenolactome. Functionally, magnesium-independent polyisoprenoid diphosphatase that catalyzes the sequential dephosphorylation of presqualene, farnesyl, geranyl and geranylgeranyl diphosphates. Functions in the innate immune response through the dephosphorylation of presqualene diphosphate which acts as a potent inhibitor of the signaling pathways contributing to polymorphonuclear neutrophils activation. May regulate the biosynthesis of cholesterol and related sterols by dephosphorylating presqualene and farnesyl diphosphate, two key intermediates in this biosynthetic pathway. May also play a role in protein prenylation by acting on farnesyl diphosphate and its derivative geranylgeranyl diphosphate, two precursors for the addition of isoprenoid anchors to membrane proteins. Has a lower activity towards phosphatidic acid (PA), but through phosphatidic acid dephosphorylation may participate in the biosynthesis of phospholipids and triacylglycerols. May also act on ceramide-1-P, lysophosphatidic acid (LPA) and sphing-4-enine 1-phosphate/sphingosine-1-phosphate. This is Polyisoprenoid diphosphate/phosphate phosphohydrolase PLPP6 from Homo sapiens (Human).